We begin with the raw amino-acid sequence, 94 residues long: uncharacterized protein (94 aa).

Residues 13–33 traverse the membrane as a helical segment; sequence IVICLTTIISVTIFYILVSFF.

It is found in the membrane. This is an uncharacterized protein from Dictyostelium discoideum (Social amoeba).